We begin with the raw amino-acid sequence, 389 residues long: 5-hydroxytryptamine receptor 1B (389 aa).

The disordered stretch occupies residues 1-27 (MEETNTHCAPPPPAGSQTGVSQANLSS). The Extracellular segment spans residues 1 to 45 (MEETNTHCAPPPPAGSQTGVSQANLSSAPPNCSTEGYIYQDSIAL). Positions 15 to 27 (GSQTGVSQANLSS) are enriched in polar residues. Residues Asn-24 and Asn-31 are each glycosylated (N-linked (GlcNAc...) asparagine). Residues 46-71 (PWKVLLILVLALFTLATTLSNAFVIA) form a helical membrane-spanning segment. Residues 72–85 (TVYRTRKLHTPANY) are Cytoplasmic-facing. Residues 86–110 (LIASLAVTDLLVSILVMPISTMYTV) form a helical membrane-spanning segment. Residues 111-118 (TGRWTLGQ) are Extracellular-facing. A helical membrane pass occupies residues 119 to 144 (VVCDFWLSSDITCCTASILHLCVIAL). Cys-121 and Cys-198 are oxidised to a cystine. Ergotamine is bound by residues Asp-128 and Thr-133. A DRY motif; important for ligand-induced conformation changes and signaling motif is present at residues 145 to 147 (DRY). The Cytoplasmic segment spans residues 145-164 (DRYWAITDAVEYSAKRTPKR). The chain crosses the membrane as a helical span at residues 165–183 (AAVMIALVWVFSISISLPP). Residues 184–204 (FFWRQAKAEEEVSDCRVNTDH) lie on the Extracellular side of the membrane. Val-200 lines the ergotamine pocket. A helical membrane pass occupies residues 205 to 228 (MLYTVYSTVGAFYFPTLLLIALYG). The Cytoplasmic segment spans residues 229 to 314 (RIYVEARSRI…AARERKATKT (86 aa)). A compositionally biased stretch (polar residues) spans 258–271 (DSPGSTSSVTSVNS). Positions 258-281 (DSPGSTSSVTSVNSRAPDVPSESG) are disordered. Residues 315–336 (LGIILGAFIVCWLPFFIISLVM) form a helical membrane-spanning segment. The Extracellular portion of the chain corresponds to 337-346 (PICKDACWFH). A helical membrane pass occupies residues 347–369 (LAIFDFFTWLGYLNSLINPIIYT). The short motif at 364-368 (NPIIY) is the NPxxY motif; important for ligand-induced conformation changes and signaling element. At 370–389 (MSNEDFKQAFHKLIRFKCTG) the chain is on the cytoplasmic side. Cys-387 carries the S-palmitoyl cysteine lipid modification.

It belongs to the G-protein coupled receptor 1 family. As to quaternary structure, homodimer. Heterodimer with HTR1D. Post-translationally, phosphorylated. Desensitization of the receptor may be mediated by its phosphorylation. Palmitoylated.

It is found in the cell membrane. Functionally, G-protein coupled receptor for 5-hydroxytryptamine (serotonin). Also functions as a receptor for ergot alkaloid derivatives, various anxiolytic and antidepressant drugs and other psychoactive substances, such as lysergic acid diethylamide (LSD). Ligand binding causes a conformation change that triggers signaling via guanine nucleotide-binding proteins (G proteins) and modulates the activity of downstream effectors, such as adenylate cyclase. HTR1B is coupled to G(i)/G(o) G alpha proteins and mediates inhibitory neurotransmission by inhibiting adenylate cyclase activity. Arrestin family members inhibit signaling via G proteins and mediate activation of alternative signaling pathways. Regulates the release of 5-hydroxytryptamine, dopamine and acetylcholine in the brain, and thereby affects neural activity, nociceptive processing, pain perception, mood and behavior. Besides, plays a role in vasoconstriction of cerebral arteries. This Felis catus (Cat) protein is 5-hydroxytryptamine receptor 1B (HTR1B).